Reading from the N-terminus, the 333-residue chain is DNA-directed RNA polymerase subunit alpha (333 aa).

The tract at residues 1–227 is alpha N-terminal domain (alpha-NTD); the sequence is MRKIKVAPFM…VMNKQLSVFN (227 aa). An alpha C-terminal domain (alpha-CTD) region spans residues 247–333; it reads ELKPFLAAVD…LVKKLEQLKA (87 aa).

This sequence belongs to the RNA polymerase alpha chain family. In terms of assembly, homodimer. The RNAP catalytic core consists of 2 alpha, 1 beta, 1 beta' and 1 omega subunit. When a sigma factor is associated with the core the holoenzyme is formed, which can initiate transcription.

The catalysed reaction is RNA(n) + a ribonucleoside 5'-triphosphate = RNA(n+1) + diphosphate. Functionally, DNA-dependent RNA polymerase catalyzes the transcription of DNA into RNA using the four ribonucleoside triphosphates as substrates. The polypeptide is DNA-directed RNA polymerase subunit alpha (Sulfurovum sp. (strain NBC37-1)).